A 57-amino-acid chain; its full sequence is Large ribosomal subunit protein bL32 (57 aa).

A disordered region spans residues methionine 1 to lysine 21.

Belongs to the bacterial ribosomal protein bL32 family.

The sequence is that of Large ribosomal subunit protein bL32 from Oceanobacillus iheyensis (strain DSM 14371 / CIP 107618 / JCM 11309 / KCTC 3954 / HTE831).